The following is a 229-amino-acid chain: 7-cyano-7-deazaguanine synthase (229 aa).

ATP is bound at residue 7–17 (LSGGLDSTTVL). 4 residues coordinate Zn(2+): C191, C204, C207, and C210.

It belongs to the QueC family. The cofactor is Zn(2+).

It carries out the reaction 7-carboxy-7-deazaguanine + NH4(+) + ATP = 7-cyano-7-deazaguanine + ADP + phosphate + H2O + H(+). The protein operates within purine metabolism; 7-cyano-7-deazaguanine biosynthesis. Its function is as follows. Catalyzes the ATP-dependent conversion of 7-carboxy-7-deazaguanine (CDG) to 7-cyano-7-deazaguanine (preQ(0)). The protein is 7-cyano-7-deazaguanine synthase of Cyanothece sp. (strain PCC 7425 / ATCC 29141).